The primary structure comprises 224 residues: Ribose-5-phosphate isomerase A (224 aa).

Substrate is bound by residues threonine 32–threonine 35, aspartate 85–aspartate 88, and lysine 98–glycine 101. Glutamate 107 serves as the catalytic Proton acceptor. Residue lysine 125 coordinates substrate.

The protein belongs to the ribose 5-phosphate isomerase family. Homodimer.

It catalyses the reaction aldehydo-D-ribose 5-phosphate = D-ribulose 5-phosphate. Its pathway is carbohydrate degradation; pentose phosphate pathway; D-ribose 5-phosphate from D-ribulose 5-phosphate (non-oxidative stage): step 1/1. Catalyzes the reversible conversion of ribose-5-phosphate to ribulose 5-phosphate. The protein is Ribose-5-phosphate isomerase A of Pseudomonas putida (strain GB-1).